The primary structure comprises 210 residues: Eukaryotic translation initiation factor 2 subunit gamma (210 aa).

Positions 1–196 (IGHVAHGKST…HLVETITPPR (196 aa)) constitute a tr-type G domain. A G1 region spans residues 2 to 9 (GHVAHGKS). 5–10 (AHGKST) serves as a coordination point for GTP. The segment at 30 to 34 (NITIK) is G2. The G3 stretch occupies residues 85 to 88 (DCPG). GTP is bound by residues 141–144 (NKID) and 174–176 (SAI). The tract at residues 141-144 (NKID) is G4. Residues 174–176 (SAI) form a G5 region.

This sequence belongs to the TRAFAC class translation factor GTPase superfamily. Classic translation factor GTPase family. EIF2G subfamily. As to quaternary structure, eukaryotic translation initiation factor 2 eIF2 is a heterotrimeric complex composed of an alpha, a beta and a gamma subunit. The factors eIF-1, eIF-2, eIF-3, TIF5/eIF-5 and methionyl-tRNAi form a multifactor complex (MFC) that may bind to the 40S ribosome.

The protein resides in the cytoplasm. It is found in the cytosol. The enzyme catalyses GTP + H2O = GDP + phosphate + H(+). In terms of biological role, as a subunit of eukaryotic initiation factor 2 eIF2, involved in the early steps of protein synthesis. In the presence of GTP, eIF-2 forms a ternary complex with initiator tRNA Met-tRNAi and then recruits the 40S ribosomal complex and initiation factors eIF-1, eIF-1A and eIF-3 to form the 43S pre-initiation complex (43S PIC), a step that determines the rate of protein translation. The 43S PIC binds to mRNA and scans downstream to the initiation codon, where it forms a 48S initiation complex by codon-anticodon base pairing. This leads to the displacement of eIF-1 to allow GTPase-activating protein (GAP) eIF-5-mediated hydrolysis of eIF2-bound GTP. Hydrolysis of GTP and release of Pi, which makes GTP hydrolysis irreversible, causes the release of the eIF-2-GDP binary complex from the 40S subunit, an event that is essential for the subsequent joining of the 60S ribosomal subunit to form an elongation-competent 80S ribosome. In order for eIF-2 to recycle and catalyze another round of initiation, the GDP bound to eIF-2 must be exchanged with GTP by way of a reaction catalyzed by GDP-GTP exchange factor (GEF) eIF-2B. This Spironucleus vortens protein is Eukaryotic translation initiation factor 2 subunit gamma.